A 287-amino-acid polypeptide reads, in one-letter code: Beta-lactamase GES-5 (287 aa).

A signal peptide spans 1 to 18 (MRFIHALLLAGIAHSAYA). A disulfide bridge connects residues cysteine 63 and cysteine 233. Serine 64 serves as the catalytic Nucleophile; acyl-ester intermediate. 6 residues coordinate imipenem: serine 64, serine 125, asparagine 127, threonine 230, threonine 232, and arginine 238.

It belongs to the class-A beta-lactamase family.

Its subcellular location is the secreted. It catalyses the reaction a beta-lactam + H2O = a substituted beta-amino acid. Its activity is regulated as follows. Inhibited by the beta-lactamase-blocking agents clavulanic acid, sulbactam and tazobactam, via a covalent binding to Ser-64. Functionally, confers resistance to penicillins, cephalosporins and carbapenems. Has carbapenem-hydrolyzing activity. This chain is Beta-lactamase GES-5, found in Klebsiella pneumoniae.